We begin with the raw amino-acid sequence, 448 residues long: Phosphoglucosamine mutase (448 aa).

Ser-100 acts as the Phosphoserine intermediate in catalysis. Mg(2+) is bound by residues Ser-100, Asp-240, Asp-242, and Asp-244. The residue at position 100 (Ser-100) is a Phosphoserine.

This sequence belongs to the phosphohexose mutase family. Mg(2+) is required as a cofactor. Activated by phosphorylation.

It carries out the reaction alpha-D-glucosamine 1-phosphate = D-glucosamine 6-phosphate. Functionally, catalyzes the conversion of glucosamine-6-phosphate to glucosamine-1-phosphate. The polypeptide is Phosphoglucosamine mutase (Clostridium beijerinckii (strain ATCC 51743 / NCIMB 8052) (Clostridium acetobutylicum)).